The chain runs to 418 residues: 3-isopropylmalate dehydratase large subunit 1 (418 aa).

Residues Cys-298, Cys-358, and Cys-361 each coordinate [4Fe-4S] cluster.

This sequence belongs to the aconitase/IPM isomerase family. LeuC type 2 subfamily. In terms of assembly, heterodimer of LeuC and LeuD. The cofactor is [4Fe-4S] cluster.

The enzyme catalyses (2R,3S)-3-isopropylmalate = (2S)-2-isopropylmalate. The protein operates within amino-acid biosynthesis; L-leucine biosynthesis; L-leucine from 3-methyl-2-oxobutanoate: step 2/4. In terms of biological role, catalyzes the isomerization between 2-isopropylmalate and 3-isopropylmalate, via the formation of 2-isopropylmaleate. The polypeptide is 3-isopropylmalate dehydratase large subunit 1 (Thermotoga maritima (strain ATCC 43589 / DSM 3109 / JCM 10099 / NBRC 100826 / MSB8)).